Consider the following 858-residue polypeptide: Rho GTPase-activating protein 17 (858 aa).

The region spanning 14 to 246 (QTVGRAEKTE…MRAHQDKWAE (233 aa)) is the BAR domain. In terms of domain architecture, Rho-GAP spans 252-442 (TPLEEHLKRS…PIIQHADWFF (191 aa)). Over residues 459–475 (TPNSNHSSHTGNDSDSG) the composition is skewed to polar residues. The disordered stretch occupies residues 459–482 (TPNSNHSSHTGNDSDSGTLERKRP). S484 is subject to Phosphoserine. The interval 516-823 (RKHISPAFQP…VTDTNSRVSE (308 aa)) is disordered. Residues 543–552 (PSQSSRADSN) are compositionally biased toward polar residues. Positions 553 to 563 (SVGGPVPSSSG) are enriched in low complexity. At S575 the chain carries Phosphoserine. Residues 592-617 (RNSNQITTVPNQAQTGGNSHQLSVGT) show a composition bias toward polar residues. Over residues 637–650 (APAPPKPGNPPPGH) the composition is skewed to pro residues. Over residues 653-702 (GQSSPGTGTSPKPSTRSPSPPQQQQQQQQQQQQQQQQQQQQQQQQQQQQQ) the composition is skewed to low complexity. 2 positions are modified to phosphoserine: S710 and S712. 2 stretches are compositionally biased toward pro residues: residues 716-729 (IQAP…PPTQ) and 738-756 (EPGP…PPPA). A phosphothreonine mark is found at T742, T746, and T748. Residues 742-755 (TPPQTPTPPSTPPP) carry the SH3-binding motif. S751 carries the post-translational modification Phosphoserine. T752 carries the phosphothreonine modification. The span at 757 to 769 (KQNSSQSETTQLH) shows a compositional bias: polar residues. The span at 784-794 (RPSVPPPPNPP) shows a compositional bias: pro residues. A compositionally biased stretch (polar residues) spans 806–823 (SVPTASRIVTDTNSRVSE).

As to quaternary structure, component of a complex whose core is composed of ARHGAP17, AMOT, PALS1, PATJ and PARD3/PAR3. Interacts with NHERF1, FNBP1, TRIP10, CAPZA (CAPZA1, CAPZA2 or CAPZA3), CAPZB, CD2AP and SH3KBP1/CIN85. In terms of tissue distribution, highly expressed in brain; neuron-specific (at protein level). Isoform 2, isoform 3 and isoform 4 are predominantly expressed in neuronal tissues and correlate well with the differentiation of neurons, while isoform 1 is strongly expressed in embryonic brain.

The protein localises to the membrane. It is found in the cytoplasm. Its subcellular location is the cell junction. It localises to the tight junction. In terms of biological role, rho GTPase-activating protein involved in the maintenance of tight junction by regulating the activity of CDC42, thereby playing a central role in apical polarity of epithelial cells. Specifically acts as a GTPase activator for the CDC42 GTPase by converting it to an inactive GDP-bound state. The complex formed with AMOT acts by regulating the uptake of polarity proteins at tight junctions, possibly by deciding whether tight junction transmembrane proteins are recycled back to the plasma membrane or sent elsewhere. Participates in the Ca(2+)-dependent regulation of exocytosis, possibly by catalyzing GTPase activity of Rho family proteins and by inducing the reorganization of the cortical actin filaments. Acts as a GTPase activator in vitro for RAC1. The sequence is that of Rho GTPase-activating protein 17 (Arhgap17) from Rattus norvegicus (Rat).